A 513-amino-acid chain; its full sequence is MSLSTKREHSGDVTDSSFKRQQRSNKPSSEYTCLGHLVNLIPGKEQKVEITNRNVTTIGRSRSCDVILSEPDISTFHAEFHLLQMDVDNFQRNLINVIDKSRNGTFINGNRLVKKDYILKNGDRIVFGKSCSFLFKYASSSSTDIENDDEKVSSESRSYKNDDEVFKKPQISATSSQNATTSAAIRKLNKTRPVSFFDKYLLGKELGAGHYALVKEAKNKKTGQQVAVKIFHAQQNDDQKKNKQFREETNILMRVQHPNIVNLLDSFVEPISKSQIQKYLVLEKIDDGELFERIVRKTCLRQDESKALFKQLLTGLKYLHEQNIIHRDIKPENILLNITRRENPSQVQLGPWDEDEIDIQVKIADFGLAKFTGEMQFTNTLCGTPSYVAPEVLTKKGYTSKVDLWSAGVILYVCLCGFPPFSDQLGPPSLKEQILQAKYAFYSPYWDKIDDSVLHLISNLLVLNPDERYNIDEALNHPWFNDIQQQSSVSLELQRLQITDNKIPKTYSELSCL.

Basic and acidic residues predominate over residues 1–12 (MSLSTKREHSGD). The interval 1 to 29 (MSLSTKREHSGDVTDSSFKRQQRSNKPSS) is disordered. Serine 10 is subject to Phosphoserine. Residues 56–112 (TTIGRSRSCDVILSEPDISTFHAEFHLLQMDVDNFQRNLINVIDKSRNGTFINGNRL) enclose the FHA domain. Position 139 is a phosphoserine (serine 139). Positions 200–480 (YLLGKELGAG…IDEALNHPWF (281 aa)) constitute a Protein kinase domain. Residues 206-214 (LGAGHYALV) and lysine 229 each bind ATP. Residue aspartate 328 is the Proton acceptor of the active site. Threonine 380 is subject to Phosphothreonine.

This sequence belongs to the protein kinase superfamily. CAMK Ser/Thr protein kinase family. CHEK2 subfamily. In terms of assembly, interacts with the PAB-dependent poly(A)-nuclease (PAN) complex regulatory subunit PAN3 via its forkhead-associated (FHA) domain. Autophosphorylation increases in response to DNA damage.

It localises to the nucleus. The enzyme catalyses L-seryl-[protein] + ATP = O-phospho-L-seryl-[protein] + ADP + H(+). The catalysed reaction is L-threonyl-[protein] + ATP = O-phospho-L-threonyl-[protein] + ADP + H(+). In terms of biological role, transducer of the DNA damage signal. Phosphorylates SML1 on serine residues. Cooperates with the PAN deadenylation complex in the regulation of RAD5 mRNA levels and cell survival in response to replicational stress. The sequence is that of DNA damage response protein kinase DUN1 (DUN1) from Saccharomyces cerevisiae (strain ATCC 204508 / S288c) (Baker's yeast).